The primary structure comprises 1322 residues: Phosphoribosylformylglycinamidine synthase (1322 aa).

Residues 307-318 and Ala-678 contribute to the ATP site; that span reads GASTGSGGEIRD. Residues Glu-718, Asn-722, and Asp-886 each contribute to the Mg(2+) site. One can recognise a Glutamine amidotransferase type-1 domain in the interval 1069–1322; sequence MAILREQGVN…MFRNARVNLG (254 aa). The active-site Nucleophile is Cys-1162. Catalysis depends on residues His-1287 and Glu-1289.

In the N-terminal section; belongs to the FGAMS family. In terms of assembly, monomer.

The protein localises to the cytoplasm. It carries out the reaction N(2)-formyl-N(1)-(5-phospho-beta-D-ribosyl)glycinamide + L-glutamine + ATP + H2O = 2-formamido-N(1)-(5-O-phospho-beta-D-ribosyl)acetamidine + L-glutamate + ADP + phosphate + H(+). The protein operates within purine metabolism; IMP biosynthesis via de novo pathway; 5-amino-1-(5-phospho-D-ribosyl)imidazole from N(2)-formyl-N(1)-(5-phospho-D-ribosyl)glycinamide: step 1/2. Functionally, phosphoribosylformylglycinamidine synthase involved in the purines biosynthetic pathway. Catalyzes the ATP-dependent conversion of formylglycinamide ribonucleotide (FGAR) and glutamine to yield formylglycinamidine ribonucleotide (FGAM) and glutamate. This chain is Phosphoribosylformylglycinamidine synthase, found in Photobacterium profundum (strain SS9).